The chain runs to 792 residues: Ribosome biogenesis protein BOP1 homolog (792 aa).

A compositionally biased stretch (basic residues) spans 1–11 (MTKKRTVKRKV). The disordered stretch occupies residues 1–167 (MTKKRTVKRK…ESDTSDEEDI (167 aa)). 4 stretches are compositionally biased toward acidic residues: residues 44-53 (EDTTDDEGID), 60-72 (SSED…DEEG), 82-117 (EAEE…ESDA), and 157-166 (EESDTSDEED). WD repeat units follow at residues 453-494 (GHTD…RTIE), 496-534 (NDVV…KLLI), 578-620 (THFK…SQIP), 623-661 (KSKG…LIKK), 664-703 (TNSK…KPYQ), 707-746 (LHRN…DLLQ), and 762-792 (RDEF…RLYT).

The protein belongs to the WD repeat BOP1/ERB1 family.

It is found in the nucleus. The protein resides in the nucleolus. Its subcellular location is the nucleoplasm. Its function is as follows. Required for maturation of ribosomal RNAs and formation of the large ribosomal subunit. The protein is Ribosome biogenesis protein BOP1 homolog of Drosophila mojavensis (Fruit fly).